The following is a 113-amino-acid chain: Large ribosomal subunit protein eL31 (113 aa).

It belongs to the eukaryotic ribosomal protein eL31 family. As to quaternary structure, component of the large ribosomal subunit (LSU). Mature yeast ribosomes consist of a small (40S) and a large (60S) subunit. The 40S small subunit contains 1 molecule of ribosomal RNA (18S rRNA) and at least 33 different proteins. The large 60S subunit contains 3 rRNA molecules (25S, 5.8S and 5S rRNA) and at least 46 different proteins.

It localises to the cytoplasm. In terms of biological role, component of the ribosome, a large ribonucleoprotein complex responsible for the synthesis of proteins in the cell. The small ribosomal subunit (SSU) binds messenger RNAs (mRNAs) and translates the encoded message by selecting cognate aminoacyl-transfer RNA (tRNA) molecules. The large subunit (LSU) contains the ribosomal catalytic site termed the peptidyl transferase center (PTC), which catalyzes the formation of peptide bonds, thereby polymerizing the amino acids delivered by tRNAs into a polypeptide chain. The nascent polypeptides leave the ribosome through a tunnel in the LSU and interact with protein factors that function in enzymatic processing, targeting, and the membrane insertion of nascent chains at the exit of the ribosomal tunnel. This chain is Large ribosomal subunit protein eL31 (rpl31), found in Schizosaccharomyces pombe (strain 972 / ATCC 24843) (Fission yeast).